We begin with the raw amino-acid sequence, 284 residues long: Aquaporin NIP1-1 (284 aa).

Residues 1 to 12 (MAGGDNNSQTTN) are compositionally biased toward polar residues. The disordered stretch occupies residues 1–28 (MAGGDNNSQTTNGGSGHEQRAMEEGRKQ). Residues 17-28 (HEQRAMEEGRKQ) show a composition bias toward basic and acidic residues. Transmembrane regions (helical) follow at residues 50–70 (IIAE…AVTI) and 78–98 (ITFP…VYAV). The short motif at 107–109 (NPA) is the NPA 1 element. Helical transmembrane passes span 129 to 149 (AAAQ…MFGG), 166 to 186 (SLVL…GVAT), and 194 to 214 (LAGL…GPIS). The NPA 2 signature appears at 219-221 (NPA). Residues 236–256 (IWVYIVGPVAGAVAGAWAYNI) traverse the membrane as a helical segment.

The protein belongs to the MIP/aquaporin (TC 1.A.8) family. NIP (TC 1.A.8.12) subfamily. In terms of tissue distribution, expressed in leaves and at lower levels in roots and anthers.

Its subcellular location is the membrane. In terms of biological role, aquaporins facilitate the transport of water and small neutral solutes across cell membranes. The protein is Aquaporin NIP1-1 (NIP1-1) of Oryza sativa subsp. japonica (Rice).